A 328-amino-acid chain; its full sequence is dITP/XTP pyrophosphatase (328 aa).

Residues 1-129 (MSEKIYEYKD…ATSEQGFGDI (129 aa)) are unknown. Residues 130-324 (ILIATRNEGK…KLMEVFPAWQ (195 aa)) are NTP pyrophosphatase. 134–139 (TRNEGK) provides a ligand contact to substrate. D196 serves as the catalytic Proton acceptor. D196 provides a ligand contact to Mg(2+). Residues S197, 280 to 283 (FGYD), K303, and 308 to 309 (HR) each bind substrate.

It belongs to the HAM1 NTPase family. Homodimer. Mg(2+) is required as a cofactor.

It carries out the reaction XTP + H2O = XMP + diphosphate + H(+). The enzyme catalyses dITP + H2O = dIMP + diphosphate + H(+). The catalysed reaction is ITP + H2O = IMP + diphosphate + H(+). Its function is as follows. Pyrophosphatase that catalyzes the hydrolysis of nucleoside triphosphates to their monophosphate derivatives, with a high preference for the non-canonical purine nucleotides XTP (xanthosine triphosphate), dITP (deoxyinosine triphosphate) and ITP. Seems to function as a house-cleaning enzyme that removes non-canonical purine nucleotides from the nucleotide pool, thus preventing their incorporation into DNA/RNA and avoiding chromosomal lesions. This chain is dITP/XTP pyrophosphatase, found in Streptococcus pyogenes serotype M1.